We begin with the raw amino-acid sequence, 263 residues long: Shikimate dehydrogenase (NADP(+)) (263 aa).

Residues 16-18 (SKS) and threonine 65 contribute to the shikimate site. Residue lysine 69 is the Proton acceptor of the active site. Positions 90 and 105 each coordinate shikimate. Residues 125–129 (GSGGS) and leucine 208 contribute to the NADP(+) site. Tyrosine 210 contributes to the shikimate binding site. Glycine 230 serves as a coordination point for NADP(+).

This sequence belongs to the shikimate dehydrogenase family. Homodimer.

The catalysed reaction is shikimate + NADP(+) = 3-dehydroshikimate + NADPH + H(+). It participates in metabolic intermediate biosynthesis; chorismate biosynthesis; chorismate from D-erythrose 4-phosphate and phosphoenolpyruvate: step 4/7. Its function is as follows. Involved in the biosynthesis of the chorismate, which leads to the biosynthesis of aromatic amino acids. Catalyzes the reversible NADPH linked reduction of 3-dehydroshikimate (DHSA) to yield shikimate (SA). This Helicobacter acinonychis (strain Sheeba) protein is Shikimate dehydrogenase (NADP(+)).